We begin with the raw amino-acid sequence, 184 residues long: Ribosome-recycling factor (184 aa).

It belongs to the RRF family.

It localises to the cytoplasm. Its function is as follows. Responsible for the release of ribosomes from messenger RNA at the termination of protein biosynthesis. May increase the efficiency of translation by recycling ribosomes from one round of translation to another. This chain is Ribosome-recycling factor, found in Borrelia hermsii (strain HS1 / DAH).